The primary structure comprises 350 residues: Phosphotriesterase-related protein (350 aa).

A divalent metal cation-binding residues include His-22, His-24, Glu-169, His-201, His-230, and Asp-298.

It belongs to the metallo-dependent hydrolases superfamily. Phosphotriesterase family. It depends on a divalent metal cation as a cofactor.

The sequence is that of Phosphotriesterase-related protein from Drosophila erecta (Fruit fly).